We begin with the raw amino-acid sequence, 337 residues long: Mannan polymerase complex subunit mnn9 (337 aa).

At 1-8 (MRVYNKSR) the chain is on the cytoplasmic side. A helical; Signal-anchor for type II membrane protein membrane pass occupies residues 9–29 (IVGQLLFVALGITFIYYLFTP). Residues 30 to 337 (SVNSNAKVQI…PYYLVFHHNE (308 aa)) lie on the Lumenal side of the membrane.

The protein belongs to the ANP1/MMN9/VAN1 family.

Its subcellular location is the endoplasmic reticulum membrane. The protein resides in the golgi apparatus membrane. It functions in the pathway protein modification; protein glycosylation. Functionally, required for the addition of the long alpha 1,6-mannose backbone of N-linked glycans on cell wall and periplasmic proteins. The chain is Mannan polymerase complex subunit mnn9 from Schizosaccharomyces pombe (strain 972 / ATCC 24843) (Fission yeast).